A 52-amino-acid chain; its full sequence is DNA-directed RNA polymerase subunit Rpo12 (52 aa).

Positions 13, 30, and 33 each coordinate Zn(2+).

This sequence belongs to the archaeal Rpo12/eukaryotic RPC10 RNA polymerase subunit family. Part of the RNA polymerase complex. Zn(2+) is required as a cofactor.

It localises to the cytoplasm. The enzyme catalyses RNA(n) + a ribonucleoside 5'-triphosphate = RNA(n+1) + diphosphate. In terms of biological role, DNA-dependent RNA polymerase (RNAP) catalyzes the transcription of DNA into RNA using the four ribonucleoside triphosphates as substrates. The protein is DNA-directed RNA polymerase subunit Rpo12 of Pyrobaculum neutrophilum (strain DSM 2338 / JCM 9278 / NBRC 100436 / V24Sta) (Thermoproteus neutrophilus).